Consider the following 168-residue polypeptide: Transcriptional regulator MraZ (168 aa).

2 SpoVT-AbrB domains span residues 8–51 (EYNQ…GGDR) and 90–140 (ALNM…KADT).

Belongs to the MraZ family. Forms oligomers.

It localises to the cytoplasm. The protein resides in the nucleoid. This chain is Transcriptional regulator MraZ, found in Cereibacter sphaeroides (strain ATCC 17029 / ATH 2.4.9) (Rhodobacter sphaeroides).